The sequence spans 459 residues: Ribulose bisphosphate carboxylase large chain (459 aa).

Position 4 is an N6,N6,N6-trimethyllysine (K4). Substrate-binding residues include N113 and T163. K165 acts as the Proton acceptor in catalysis. K167 is a substrate binding site. 3 residues coordinate Mg(2+): K191, D193, and E194. K191 carries the N6-carboxylysine modification. H284 (proton acceptor) is an active-site residue. Residues R285, H317, and S369 each contribute to the substrate site.

Belongs to the RuBisCO large chain family. Type I subfamily. Heterohexadecamer of 8 large chains and 8 small chains; disulfide-linked. The disulfide link is formed within the large subunit homodimers. Mg(2+) serves as cofactor. Post-translationally, the disulfide bond which can form in the large chain dimeric partners within the hexadecamer appears to be associated with oxidative stress and protein turnover.

The protein resides in the plastid. It localises to the chloroplast. The catalysed reaction is 2 (2R)-3-phosphoglycerate + 2 H(+) = D-ribulose 1,5-bisphosphate + CO2 + H2O. It catalyses the reaction D-ribulose 1,5-bisphosphate + O2 = 2-phosphoglycolate + (2R)-3-phosphoglycerate + 2 H(+). In terms of biological role, ruBisCO catalyzes two reactions: the carboxylation of D-ribulose 1,5-bisphosphate, the primary event in carbon dioxide fixation, as well as the oxidative fragmentation of the pentose substrate in the photorespiration process. Both reactions occur simultaneously and in competition at the same active site. In Parnassia fimbriata (Fringed grass-of-Parnassus), this protein is Ribulose bisphosphate carboxylase large chain.